Reading from the N-terminus, the 1322-residue chain is Ice nucleation protein InaA (1322 aa).

The interval 162 to 1281 (ATYGSTLSGT…LTAGENSVLI (1120 aa)) is octapeptide periodicity. Polar residues-rich tracts occupy residues 271–302 (SLTA…QKGS), 327–350 (TQTA…QKGS), 373–398 (GSTQ…QKGS), and 423–446 (TQTA…QKGS). 4 disordered regions span residues 271–303 (SLTA…KGSD), 327–358 (TQTA…GYGS), 372–399 (YGST…KGSD), and 423–448 (TQTA…GSDL).

The protein belongs to the bacterial ice nucleation protein family.

The protein localises to the cell outer membrane. Its function is as follows. Ice nucleation proteins enable bacteria to nucleate crystallization in supercooled water. The polypeptide is Ice nucleation protein InaA (inaA) (Pantoea ananas (Erwinia uredovora)).